The sequence spans 49 residues: Large ribosomal subunit protein bL33 (49 aa).

This sequence belongs to the bacterial ribosomal protein bL33 family.

This chain is Large ribosomal subunit protein bL33, found in Moorella thermoacetica (strain ATCC 39073 / JCM 9320).